The following is a 483-amino-acid chain: Malonate-semialdehyde dehydrogenase 2 (483 aa).

Positions 152, 176, 179, 180, and 229 each coordinate NAD(+). Cys284 functions as the Nucleophile in the catalytic mechanism. Glu384 is a binding site for NAD(+).

It belongs to the aldehyde dehydrogenase family. IolA subfamily. As to quaternary structure, homotetramer.

The catalysed reaction is 3-oxopropanoate + NAD(+) + CoA + H2O = hydrogencarbonate + acetyl-CoA + NADH + H(+). The enzyme catalyses 2-methyl-3-oxopropanoate + NAD(+) + CoA + H2O = propanoyl-CoA + hydrogencarbonate + NADH + H(+). It participates in polyol metabolism; myo-inositol degradation into acetyl-CoA; acetyl-CoA from myo-inositol: step 7/7. Its function is as follows. Catalyzes the oxidation of malonate semialdehyde (MSA) and methylmalonate semialdehyde (MMSA) into acetyl-CoA and propanoyl-CoA, respectively. Is involved in a myo-inositol catabolic pathway. Bicarbonate, and not CO2, is the end-product of the enzymatic reaction. This Bacillus mycoides (strain KBAB4) (Bacillus weihenstephanensis) protein is Malonate-semialdehyde dehydrogenase 2.